A 312-amino-acid chain; its full sequence is Ribosomal protein L11 methyltransferase (312 aa).

Positions 162, 183, 205, and 248 each coordinate S-adenosyl-L-methionine.

Belongs to the methyltransferase superfamily. PrmA family.

Its subcellular location is the cytoplasm. It carries out the reaction L-lysyl-[protein] + 3 S-adenosyl-L-methionine = N(6),N(6),N(6)-trimethyl-L-lysyl-[protein] + 3 S-adenosyl-L-homocysteine + 3 H(+). Functionally, methylates ribosomal protein L11. The sequence is that of Ribosomal protein L11 methyltransferase from Bacillus cereus (strain B4264).